Reading from the N-terminus, the 97-residue chain is Vitelline membrane protein 15a-2 (97 aa).

The signal sequence occupies residues 1-19 (MNKIIAALVLFTAVIGALA). The segment at 20–23 (DYPA) is required for binding to the gut receptor. The interval 26 to 46 (PPPPKPYHAPPPPPYHAPPHH) is disordered. Residues 61-97 (KAPAAKCGANLLVGCAPSVAHVPCVPVHPHPPPPAHY) form the VM domain.

Belongs to the vitelline membrane protein family. As to expression, expressed in the anterior region of the follicle cells.

It localises to the secreted. In terms of biological role, has an oostatic activity. Inhibits trypsin biosynthesis in the midgut epithelial cells which indirectly reduces the vitellogenin concentration in the hemolymph resulting in inhibition of oocyte development. The polypeptide is Vitelline membrane protein 15a-2 (15a-2) (Aedes aegypti (Yellowfever mosquito)).